Here is a 140-residue protein sequence, read N- to C-terminus: Small ribosomal subunit protein uS12 (140 aa).

A 3-methylthioaspartic acid modification is found at aspartate 102.

This sequence belongs to the universal ribosomal protein uS12 family. In terms of assembly, part of the 30S ribosomal subunit. Contacts proteins S8 and S17. May interact with IF1 in the 30S initiation complex.

With S4 and S5 plays an important role in translational accuracy. Its function is as follows. Interacts with and stabilizes bases of the 16S rRNA that are involved in tRNA selection in the A site and with the mRNA backbone. Located at the interface of the 30S and 50S subunits, it traverses the body of the 30S subunit contacting proteins on the other side and probably holding the rRNA structure together. The combined cluster of proteins S8, S12 and S17 appears to hold together the shoulder and platform of the 30S subunit. This is Small ribosomal subunit protein uS12 from Bacillus anthracis (strain A0248).